Reading from the N-terminus, the 160-residue chain is Large ribosomal subunit protein uL16 (160 aa).

This sequence belongs to the universal ribosomal protein uL16 family. Part of the 50S ribosomal subunit.

In terms of biological role, binds 23S rRNA and is also seen to make contacts with the A and possibly P site tRNAs. The chain is Large ribosomal subunit protein uL16 from Prochlorococcus marinus (strain MIT 9515).